The following is a 157-amino-acid chain: ATP synthase subunit delta (157 aa).

Belongs to the ATPase delta chain family. F-type ATPases have 2 components, F(1) - the catalytic core - and F(0) - the membrane proton channel. F(1) has five subunits: alpha(3), beta(3), gamma(1), delta(1), epsilon(1). F(0) has three main subunits: a(1), b(2) and c(10-14). The alpha and beta chains form an alternating ring which encloses part of the gamma chain. F(1) is attached to F(0) by a central stalk formed by the gamma and epsilon chains, while a peripheral stalk is formed by the delta and b chains.

It localises to the cell membrane. F(1)F(0) ATP synthase produces ATP from ADP in the presence of a proton or sodium gradient. F-type ATPases consist of two structural domains, F(1) containing the extramembraneous catalytic core and F(0) containing the membrane proton channel, linked together by a central stalk and a peripheral stalk. During catalysis, ATP synthesis in the catalytic domain of F(1) is coupled via a rotary mechanism of the central stalk subunits to proton translocation. In terms of biological role, this protein is part of the stalk that links CF(0) to CF(1). It either transmits conformational changes from CF(0) to CF(1) or is implicated in proton conduction. This Chloroflexus aggregans (strain MD-66 / DSM 9485) protein is ATP synthase subunit delta.